Here is a 340-residue protein sequence, read N- to C-terminus: Glyceraldehyde-3-phosphate dehydrogenase (340 aa).

NAD(+) is bound by residues 13 to 14 (TI) and Gly-112. 141–143 (SCN) serves as a coordination point for D-glyceraldehyde 3-phosphate. The active-site Nucleophile is the Cys-142. Residue Arg-170 participates in NAD(+) binding. 196-197 (HG) contacts D-glyceraldehyde 3-phosphate. Gln-302 provides a ligand contact to NAD(+).

Belongs to the glyceraldehyde-3-phosphate dehydrogenase family. In terms of assembly, homotetramer.

It localises to the cytoplasm. It carries out the reaction D-glyceraldehyde 3-phosphate + phosphate + NADP(+) = (2R)-3-phospho-glyceroyl phosphate + NADPH + H(+). The enzyme catalyses D-glyceraldehyde 3-phosphate + phosphate + NAD(+) = (2R)-3-phospho-glyceroyl phosphate + NADH + H(+). The protein operates within carbohydrate degradation; glycolysis; pyruvate from D-glyceraldehyde 3-phosphate: step 1/5. In Archaeoglobus fulgidus (strain ATCC 49558 / DSM 4304 / JCM 9628 / NBRC 100126 / VC-16), this protein is Glyceraldehyde-3-phosphate dehydrogenase (gap).